A 353-amino-acid polypeptide reads, in one-letter code: Phenol hydroxylase P5 protein (353 aa).

Residues 3 to 93 form the 2Fe-2S ferredoxin-type domain; that stretch reads YQVTIEPIGT…DMVIEADVDE (91 aa). Positions 37, 42, 45, and 77 each coordinate [2Fe-2S] cluster. The 100-residue stretch at 102 to 201 folds into the FAD-binding FR-type domain; it reads VQDYQATVIE…SGPYGQFFVR (100 aa).

As to quaternary structure, the multicomponent enzyme phenol hydroxylase is formed by P0, P1, P2, P3, P4 and P5 polypeptides. FAD is required as a cofactor. Requires [2Fe-2S] cluster as cofactor.

It catalyses the reaction phenol + NADPH + O2 + H(+) = catechol + NADP(+) + H2O. It participates in aromatic compound metabolism; phenol degradation. Functionally, catabolizes phenol, and some of its methylated derivatives. P5 is required for growth on phenol, and for in vitro phenol hydroxylase activity. Its function is as follows. Probable electron transfer from NADPH, via FAD and the 2Fe-2S center, to the oxygenase activity site of the enzyme. The protein is Phenol hydroxylase P5 protein (mphP) of Acinetobacter pittii (strain PHEA-2).